The following is a 561-amino-acid chain: uncharacterized protein (561 aa).

Disordered stretches follow at residues 369-390 (SVPE…LSKG) and 429-515 (EGLG…GESE). Serine 383 is modified (phosphoserine). Over residues 465–503 (NISPESSRFGTPSDPNSSSQSLGNEVLSRPNSNSNSAES) the composition is skewed to polar residues.

This is an uncharacterized protein from Schizosaccharomyces pombe (strain 972 / ATCC 24843) (Fission yeast).